Reading from the N-terminus, the 134-residue chain is Cytochrome b (134 aa).

Helical transmembrane passes span 33-53 (FGSL…FLAM), 77-98 (WLLR…YLHV), and 113-133 (WNVG…GYVL). Residues H83 and H97 each contribute to the heme b site.

This sequence belongs to the cytochrome b family. The cytochrome bc1 complex contains 11 subunits: 3 respiratory subunits (MT-CYB, CYC1 and UQCRFS1), 2 core proteins (UQCRC1 and UQCRC2) and 6 low-molecular weight proteins (UQCRH/QCR6, UQCRB/QCR7, UQCRQ/QCR8, UQCR10/QCR9, UQCR11/QCR10 and a cleavage product of UQCRFS1). This cytochrome bc1 complex then forms a dimer. The cofactor is heme b.

Its subcellular location is the mitochondrion inner membrane. In terms of biological role, component of the ubiquinol-cytochrome c reductase complex (complex III or cytochrome b-c1 complex) that is part of the mitochondrial respiratory chain. The b-c1 complex mediates electron transfer from ubiquinol to cytochrome c. Contributes to the generation of a proton gradient across the mitochondrial membrane that is then used for ATP synthesis. This is Cytochrome b (MT-CYB) from Chiroderma trinitatum (Little big-eyed bat).